A 145-amino-acid polypeptide reads, in one-letter code: Class I hydrophobin 1 (145 aa).

The signal sequence occupies residues methionine 1 to alanine 19. 4 disulfide bridges follow: cysteine 65/cysteine 126, cysteine 72/cysteine 120, cysteine 73/cysteine 106, and cysteine 127/cysteine 140. Asparagine 80 and asparagine 129 each carry an N-linked (GlcNAc...) asparagine glycan.

This sequence belongs to the fungal hydrophobin family. As to quaternary structure, self-assembles to form functional amyloid fibrils called rodlets. Self-assembly into fibrillar rodlets occurs spontaneously at hydrophobic:hydrophilic interfaces and the rodlets further associate laterally to form amphipathic monolayers.

The protein resides in the secreted. Its subcellular location is the cell wall. Its function is as follows. Aerial growth, conidiation, and dispersal of filamentous fungi in the environment rely upon a capability of their secreting small amphipathic proteins called hydrophobins (HPBs) with low sequence identity. Class I can self-assemble into an outermost layer of rodlet bundles on aerial cell surfaces, conferring cellular hydrophobicity that supports fungal growth, development and dispersal; whereas Class II form highly ordered films at water-air interfaces through intermolecular interactions but contribute nothing to the rodlet structure. Hyd1 is a class I hydrophobin that is crucial for the initiation of primordia formation. Plays also important roles in nitrogen regulation and resistance to abiotic stresses. The protein is Class I hydrophobin 1 of Ganoderma lucidum (Ling zhi medicinal fungus).